Reading from the N-terminus, the 273-residue chain is Large ribosomal subunit protein uL2cz/uL2cy (273 aa).

2 disordered regions span residues 1-25 (MAIH…VKSN) and 224-273 (NPVD…RRRK).

Belongs to the universal ribosomal protein uL2 family. Part of the 50S ribosomal subunit.

The protein resides in the plastid. It localises to the chloroplast. This chain is Large ribosomal subunit protein uL2cz/uL2cy (rpl2-A), found in Phalaenopsis aphrodite subsp. formosana (Moth orchid).